A 395-amino-acid polypeptide reads, in one-letter code: Nickel and cobalt resistance protein CnrB (395 aa).

The chain crosses the membrane as a helical span at residues 13–33; that stretch reads MIAGVAAVAAAVGFGAAHLPV. A disordered region spans residues 35 to 55; that stretch reads EKSPASTQAPEAQKPQSAPVK. Positions 37–50 are enriched in polar residues; the sequence is SPASTQAPEAQKPQ. The stretch at 140 to 193 forms a coiled coil; it reads AAERKVAQAKADLARKTYEREASLFQQGVTPRQEMEAAKAALDVAQAEALRAAT.

It belongs to the membrane fusion protein (MFP) (TC 8.A.1) family.

The protein localises to the cell inner membrane. The products of the genes cnrA, cnrB, and cnrC are likely to form a membrane-bound protein complex catalyzing an energy-dependent efflux of Ni(2+) and Co(2+). The mechanism of action of the CnrCBA complex may be that of a proton/cation antiporter. The protein is Nickel and cobalt resistance protein CnrB (cnrB) of Cupriavidus metallidurans (strain ATCC 43123 / DSM 2839 / NBRC 102507 / CH34) (Ralstonia metallidurans).